We begin with the raw amino-acid sequence, 186 residues long: Phosphoheptose isomerase (186 aa).

Residues 33 to 186 enclose the SIS domain; the sequence is LCECLKKGGK…TLCQIIDEGF (154 aa). 48–50 lines the substrate pocket; it reads NGG. His-57 and Glu-61 together coordinate Zn(2+). Residues Glu-61, 90-91, 116-118, Ser-121, and Gln-168 each bind substrate; these read ND and STS. Residues Gln-168 and His-176 each contribute to the Zn(2+) site.

Belongs to the SIS family. GmhA subfamily. Homotetramer. It depends on Zn(2+) as a cofactor.

The protein localises to the cytoplasm. It carries out the reaction 2 D-sedoheptulose 7-phosphate = D-glycero-alpha-D-manno-heptose 7-phosphate + D-glycero-beta-D-manno-heptose 7-phosphate. The protein operates within carbohydrate biosynthesis; D-glycero-D-manno-heptose 7-phosphate biosynthesis; D-glycero-alpha-D-manno-heptose 7-phosphate and D-glycero-beta-D-manno-heptose 7-phosphate from sedoheptulose 7-phosphate: step 1/1. Catalyzes the isomerization of sedoheptulose 7-phosphate in D-glycero-D-manno-heptose 7-phosphate. The protein is Phosphoheptose isomerase of Campylobacter jejuni subsp. jejuni serotype O:6 (strain 81116 / NCTC 11828).